The primary structure comprises 501 residues: Cytochrome P450 71B23 (501 aa).

The helical transmembrane segment at 1-21 (MSIFLCFLLLLLLLLVTIIFT) threads the bilayer. Position 443 (Cys-443) interacts with heme.

Belongs to the cytochrome P450 family. The cofactor is heme.

Its subcellular location is the membrane. This Arabidopsis thaliana (Mouse-ear cress) protein is Cytochrome P450 71B23 (CYP71B23).